A 131-amino-acid polypeptide reads, in one-letter code: Acidic leucine-rich nuclear phosphoprotein 32 family member D (131 aa).

5 LRR repeats span residues 18-38 (DVKE…EGLT), 43-64 (ELEL…PKLN), 65-87 (KLKK…AEKC), 89-110 (NLIH…EPLK), and 114-131 (NLES…LNNY).

This sequence belongs to the ANP32 family.

The protein is Acidic leucine-rich nuclear phosphoprotein 32 family member D (ANP32D) of Homo sapiens (Human).